We begin with the raw amino-acid sequence, 511 residues long: Potassium voltage-gated channel subfamily A member 10 (511 aa).

Residues 25 to 44 are disordered; it reads EPGYATDFDPTSSKGRPGSS. A helical transmembrane segment spans residues 218 to 238; the sequence is VAVVSVLVVVISITIFCLETL. A helical transmembrane segment spans residues 271-292; sequence FFMVESTCIVWFTFELVLRFVV. A lipid anchor (S-palmitoyl cysteine) is attached at cysteine 293. The helical transmembrane segment at 303–323 threads the bilayer; the sequence is IMNIIDIISIIPYFATLITEL. A helical; Voltage-sensor transmembrane segment spans residues 339–358; it reads ILRIIRLVRVFRIFKLSRHS. Residues 375–395 form a helical membrane-spanning segment; that stretch reads LGLLIFFLFIGVILFSSAVYF. The Selectivity filter signature appears at 421–426; the sequence is TVGYGD. The helical transmembrane segment at 436-456 threads the bilayer; that stretch reads IVGTLCAIAGVLTIALPVPVI. The interval 489-511 is disordered; that stretch reads SRMGSTESLNKTNGSCSAEKSRK.

Belongs to the potassium channel family. A (Shaker) (TC 1.A.1.2) subfamily. Kv1.8/KCNA10 sub-subfamily. In terms of assembly, homotetramer. Interacts with KCN4B/POMP. Interaction with KCN4B/POMP is necessary for the modulation of channel activity by cAMP. In terms of tissue distribution, expressed strongly in the inner ear and weakly in skeletal muscle. Not detected in other tissues.

The protein localises to the membrane. It carries out the reaction K(+)(in) = K(+)(out). The channel activity is up-regulated by cAMP. Its function is as follows. Voltage-gated potassium ion channel that mediates K(+) permeability of excitable membranes. When opened in response to the voltage difference across the membrane, KCNA10 channel selectively allows the flow of potassium ions across the membrane down their electrochemical gradient. This Mus musculus (Mouse) protein is Potassium voltage-gated channel subfamily A member 10.